Consider the following 467-residue polypeptide: MTSLADLPVDVSPRHEGERIRSGDMYVELAGPKSFGAELFKVVDPDEIEPDKVEVIGPDIDEMEEGGRYPFAIYVKAAGEELEEDVEGVLERRIHEFCNYVEGFMHLNQRDQIWCRVSKNVTEKGFRLEHLGIALRELYKEEFGNVIDSVEVTIMTDEEKVEEFLEYARRVYKKRDERAKGLSEEDVNEFYVCLMCQSFAPTHVCVITPDRPSLCGSITWHDAKAAYKIDPEGPIFPIEKGECLDPEAGEYEGVNEAVKEHSQGTVERVYLHSCLEYPHTSCGCFQAVVFYIPEVDGFGIVDREYPGETPIGLPFSTMAGEASGGEQQPGFVGVSYGYMESDKFLQYDGGWERVVWMPKALKERMKHAIPDELYDKIATEEDATTVEELREFLEKVEHPVVERWAEEEEEEEEKAPEEEAPAEEPTMEVKELPIAPGGGLNVKIVLKNAKIYAEKVIIKRADREDKS.

[Ni-Fe-S] cluster contacts are provided by C193, C196, C282, and C284. Residues 403 to 428 are disordered; it reads RWAEEEEEEEEKAPEEEAPAEEPTME. Positions 405–426 are enriched in acidic residues; the sequence is AEEEEEEEEKAPEEEAPAEEPT.

It belongs to the CdhC family. Monomer. The ACDS complex is made up of alpha, epsilon, beta, gamma and delta chains with a probable stoichiometry of (alpha(2)epsilon(2))(4)-beta(8)-(gamma(1)delta(1))(8). [Ni-Fe-S] cluster is required as a cofactor.

It catalyses the reaction Co(I)-[corrinoid Fe-S protein] + acetyl-CoA + H(+) = methyl-Co(III)-[corrinoid Fe-S protein] + CO + CoA. Functionally, part of a complex that catalyzes the reversible cleavage of acetyl-CoA, allowing autotrophic growth from CO(2). The alpha-epsilon complex generates CO from CO(2), while the beta subunit (this protein) combines the CO with CoA and a methyl group to form acetyl-CoA. The methyl group, which is incorporated into acetyl-CoA, is transferred to the beta subunit by a corrinoid iron-sulfur protein (the gamma-delta complex). The sequence is that of Acetyl-CoA decarbonylase/synthase complex subunit beta from Methanopyrus kandleri (strain AV19 / DSM 6324 / JCM 9639 / NBRC 100938).